A 402-amino-acid chain; its full sequence is Formate-dependent phosphoribosylglycinamide formyltransferase (402 aa).

Residues 23 to 24 (EL) and Glu83 each bind N(1)-(5-phospho-beta-D-ribosyl)glycinamide. ATP-binding positions include Arg115, Lys156, 196-199 (EEFV), and Glu204. The ATP-grasp domain maps to 120–316 (RLAAEKVGVP…EFAIHARAVL (197 aa)). Glu274 and Glu287 together coordinate Mg(2+). N(1)-(5-phospho-beta-D-ribosyl)glycinamide contacts are provided by residues Asp294, Lys364, and 371–372 (RR).

Belongs to the PurK/PurT family. Homodimer.

It catalyses the reaction N(1)-(5-phospho-beta-D-ribosyl)glycinamide + formate + ATP = N(2)-formyl-N(1)-(5-phospho-beta-D-ribosyl)glycinamide + ADP + phosphate + H(+). Its pathway is purine metabolism; IMP biosynthesis via de novo pathway; N(2)-formyl-N(1)-(5-phospho-D-ribosyl)glycinamide from N(1)-(5-phospho-D-ribosyl)glycinamide (formate route): step 1/1. Involved in the de novo purine biosynthesis. Catalyzes the transfer of formate to 5-phospho-ribosyl-glycinamide (GAR), producing 5-phospho-ribosyl-N-formylglycinamide (FGAR). Formate is provided by PurU via hydrolysis of 10-formyl-tetrahydrofolate. The sequence is that of Formate-dependent phosphoribosylglycinamide formyltransferase from Ignicoccus hospitalis (strain KIN4/I / DSM 18386 / JCM 14125).